The chain runs to 150 residues: Triosephosphate isomerase (150 aa).

Substrate-binding residues include N9 and K11. H95 acts as the Electrophile in catalysis.

Belongs to the triosephosphate isomerase family. Homodimer.

It localises to the cytoplasm. The enzyme catalyses D-glyceraldehyde 3-phosphate = dihydroxyacetone phosphate. It participates in carbohydrate biosynthesis; gluconeogenesis. Its pathway is carbohydrate degradation; glycolysis; D-glyceraldehyde 3-phosphate from glycerone phosphate: step 1/1. This chain is Triosephosphate isomerase (tpiA), found in Mycoplasmoides pirum (Mycoplasma pirum).